A 105-amino-acid polypeptide reads, in one-letter code: Large ribosomal subunit protein eL30 (105 aa).

Belongs to the eukaryotic ribosomal protein eL30 family.

This chain is Large ribosomal subunit protein eL30 (RPL30), found in Eremothecium gossypii (strain ATCC 10895 / CBS 109.51 / FGSC 9923 / NRRL Y-1056) (Yeast).